The primary structure comprises 235 residues: Probable transcriptional regulatory protein CFF8240_0424 (235 aa).

Belongs to the TACO1 family.

It localises to the cytoplasm. The chain is Probable transcriptional regulatory protein CFF8240_0424 from Campylobacter fetus subsp. fetus (strain 82-40).